Here is a 178-residue protein sequence, read N- to C-terminus: Bryoporin (178 aa).

Ser-51, Val-83, Ser-102, Pro-104, and Tyr-134 together coordinate phosphocholine. The interval 101–117 (WSVPFDYNLYSNWWNIA) is trp-rich region.

Belongs to the actinoporin family. Plant subfamily.

With respect to regulation, inhibited by sphingomyelin. Functionally, actinoporin-related protein having hemolytic activity in vitro. Binds probably a phosphocholine derivative with the unique amido or hydroxyl groups found in sphingomyelin. Involved in drought tolerance. In Physcomitrium patens (Spreading-leaved earth moss), this protein is Bryoporin.